The primary structure comprises 336 residues: Anthranilate phosphoribosyltransferase (336 aa).

Residues glycine 79, 82–83 (GD), threonine 87, 89–92 (NIST), 107–115 (KHGNRSVSS), and serine 119 each bind 5-phospho-alpha-D-ribose 1-diphosphate. Residue glycine 79 coordinates anthranilate. Serine 91 is a binding site for Mg(2+). Asparagine 110 serves as a coordination point for anthranilate. Position 165 (arginine 165) interacts with anthranilate. Mg(2+) is bound by residues aspartate 224 and glutamate 225.

The protein belongs to the anthranilate phosphoribosyltransferase family. Homodimer. Mg(2+) is required as a cofactor.

It carries out the reaction N-(5-phospho-beta-D-ribosyl)anthranilate + diphosphate = 5-phospho-alpha-D-ribose 1-diphosphate + anthranilate. It participates in amino-acid biosynthesis; L-tryptophan biosynthesis; L-tryptophan from chorismate: step 2/5. In terms of biological role, catalyzes the transfer of the phosphoribosyl group of 5-phosphorylribose-1-pyrophosphate (PRPP) to anthranilate to yield N-(5'-phosphoribosyl)-anthranilate (PRA). The sequence is that of Anthranilate phosphoribosyltransferase from Endomicrobium trichonymphae.